The primary structure comprises 404 residues: Multidrug resistance protein MdtG (404 aa).

Transmembrane regions (helical) follow at residues 19–39, 56–76, 90–110, 113–133, 144–164, 171–191, 222–242, 254–274, 288–308, 317–337, and 376–396; these read LGCF…PLYV, LVFS…GGLA, LGMA…QFLI, ALLG…ATQV, TLST…GLLA, PVFF…FFFI, LFVT…ILTL, IAFI…LSAP, ILIV…FVQT, FLLG…LVYN, and AVFC…WNSL.

It belongs to the major facilitator superfamily. DHA1 family. MdtG (TC 2.A.1.2.20) subfamily.

The protein resides in the cell inner membrane. This chain is Multidrug resistance protein MdtG, found in Salmonella heidelberg (strain SL476).